The chain runs to 273 residues: HTH-type transcriptional activator RhaS (273 aa).

The region spanning 174 to 272 (YQLLDWLQNN…SQSPRDLRSQ (99 aa)) is the HTH araC/xylS-type domain. 2 DNA-binding regions (H-T-H motif) span residues 191–212 (PELA…KNKT) and 239–262 (VTDI…KREF).

As to quaternary structure, binds DNA as a dimer.

The protein localises to the cytoplasm. In terms of biological role, activates expression of the rhaBAD and rhaT operons. This chain is HTH-type transcriptional activator RhaS, found in Yersinia pseudotuberculosis serotype O:1b (strain IP 31758).